Here is a 257-residue protein sequence, read N- to C-terminus: 3-methyl-2-oxobutanoate hydroxymethyltransferase (257 aa).

D42 and D86 together coordinate Mg(2+). Residues 42–43, D86, and K116 each bind 3-methyl-2-oxobutanoate; that span reads DS. E118 contacts Mg(2+). E185 serves as the catalytic Proton acceptor.

It belongs to the PanB family. Homodecamer; pentamer of dimers. Mg(2+) serves as cofactor.

Its subcellular location is the cytoplasm. The catalysed reaction is 3-methyl-2-oxobutanoate + (6R)-5,10-methylene-5,6,7,8-tetrahydrofolate + H2O = 2-dehydropantoate + (6S)-5,6,7,8-tetrahydrofolate. The protein operates within cofactor biosynthesis; (R)-pantothenate biosynthesis; (R)-pantoate from 3-methyl-2-oxobutanoate: step 1/2. Functionally, catalyzes the reversible reaction in which hydroxymethyl group from 5,10-methylenetetrahydrofolate is transferred onto alpha-ketoisovalerate to form ketopantoate. This is 3-methyl-2-oxobutanoate hydroxymethyltransferase from Prochlorococcus marinus (strain MIT 9215).